A 545-amino-acid chain; its full sequence is Glucose-6-phosphate isomerase (545 aa).

E351 functions as the Proton donor in the catalytic mechanism. Residues H382 and K510 contribute to the active site.

It belongs to the GPI family.

The protein resides in the cytoplasm. The catalysed reaction is alpha-D-glucose 6-phosphate = beta-D-fructose 6-phosphate. It functions in the pathway carbohydrate biosynthesis; gluconeogenesis. The protein operates within carbohydrate degradation; glycolysis; D-glyceraldehyde 3-phosphate and glycerone phosphate from D-glucose: step 2/4. Functionally, catalyzes the reversible isomerization of glucose-6-phosphate to fructose-6-phosphate. This Shewanella woodyi (strain ATCC 51908 / MS32) protein is Glucose-6-phosphate isomerase.